The following is a 327-amino-acid chain: Metapyrocatechase (327 aa).

2 VOC domains span residues 14-126 (QLAH…IFFE) and 156-276 (RLDH…LFGD). Fe cation-binding residues include H159, H221, and E272.

This sequence belongs to the extradiol ring-cleavage dioxygenase family. Fe(2+) serves as cofactor.

It catalyses the reaction catechol + O2 = (2Z,4E)-2-hydroxy-6-oxohexa-2,4-dienoate + H(+). The chain is Metapyrocatechase (pheB) from Geobacillus stearothermophilus (Bacillus stearothermophilus).